The chain runs to 451 residues: Chromosomal replication initiator protein DnaA (451 aa).

Residues 1-73 are domain I, interacts with DnaA modulators; it reads MNAHPKEIWE…IRSLQMVTSQ (73 aa). The tract at residues 73 to 112 is domain II; sequence QKYNVKFLISSELPEEFLTLDTINEQNIKGSIIVSDEMSA. The segment at 113–329 is domain III, AAA+ region; that stretch reads MLNPKYTFTS…GALIRIVAFS (217 aa). ATP contacts are provided by glycine 157, glycine 159, lysine 160, and threonine 161. The domain IV, binds dsDNA stretch occupies residues 330–451; the sequence is SLTNKEISVD…NDLTKRLDQQ (122 aa).

The protein belongs to the DnaA family. As to quaternary structure, oligomerizes as a right-handed, spiral filament on DNA at oriC.

It is found in the cytoplasm. In terms of biological role, plays an essential role in the initiation and regulation of chromosomal replication. ATP-DnaA binds to the origin of replication (oriC) to initiate formation of the DNA replication initiation complex once per cell cycle. Binds the DnaA box (a 9 base pair repeat at the origin) and separates the double-stranded (ds)DNA. Forms a right-handed helical filament on oriC DNA; dsDNA binds to the exterior of the filament while single-stranded (ss)DNA is stabiized in the filament's interior. The ATP-DnaA-oriC complex binds and stabilizes one strand of the AT-rich DNA unwinding element (DUE), permitting loading of DNA polymerase. After initiation quickly degrades to an ADP-DnaA complex that is not apt for DNA replication. Binds acidic phospholipids. This Clostridium kluyveri (strain NBRC 12016) protein is Chromosomal replication initiator protein DnaA.